The primary structure comprises 301 residues: Phosphatidylserine decarboxylase proenzyme (301 aa).

Catalysis depends on charge relay system; for autoendoproteolytic cleavage activity residues aspartate 117, histidine 173, and serine 260. Serine 260 acts as the Schiff-base intermediate with substrate; via pyruvic acid; for decarboxylase activity in catalysis. The residue at position 260 (serine 260) is a Pyruvic acid (Ser); by autocatalysis.

It belongs to the phosphatidylserine decarboxylase family. PSD-B subfamily. Prokaryotic type II sub-subfamily. In terms of assembly, heterodimer of a large membrane-associated beta subunit and a small pyruvoyl-containing alpha subunit. It depends on pyruvate as a cofactor. In terms of processing, is synthesized initially as an inactive proenzyme. Formation of the active enzyme involves a self-maturation process in which the active site pyruvoyl group is generated from an internal serine residue via an autocatalytic post-translational modification. Two non-identical subunits are generated from the proenzyme in this reaction, and the pyruvate is formed at the N-terminus of the alpha chain, which is derived from the carboxyl end of the proenzyme. The autoendoproteolytic cleavage occurs by a canonical serine protease mechanism, in which the side chain hydroxyl group of the serine supplies its oxygen atom to form the C-terminus of the beta chain, while the remainder of the serine residue undergoes an oxidative deamination to produce ammonia and the pyruvoyl prosthetic group on the alpha chain. During this reaction, the Ser that is part of the protease active site of the proenzyme becomes the pyruvoyl prosthetic group, which constitutes an essential element of the active site of the mature decarboxylase.

Its subcellular location is the cell membrane. The enzyme catalyses a 1,2-diacyl-sn-glycero-3-phospho-L-serine + H(+) = a 1,2-diacyl-sn-glycero-3-phosphoethanolamine + CO2. The protein operates within phospholipid metabolism; phosphatidylethanolamine biosynthesis; phosphatidylethanolamine from CDP-diacylglycerol: step 2/2. Catalyzes the formation of phosphatidylethanolamine (PtdEtn) from phosphatidylserine (PtdSer). This Chlamydia trachomatis serovar L2 (strain ATCC VR-902B / DSM 19102 / 434/Bu) protein is Phosphatidylserine decarboxylase proenzyme.